Consider the following 265-residue polypeptide: Polyglutamine-binding protein 1 (265 aa).

Residues 46–80 enclose the WW domain; that stretch reads EGLPPSWYKVFDPSCGLPYYWNADTDLVSWLSPHD. Serine 94 is subject to Phosphoserine. The interval 94 to 265 is disordered; it reads SSNADAEEKL…AEASRTKQQD (172 aa). Residues 99 to 175 are compositionally biased toward basic and acidic residues; the sequence is AEEKLDRSHD…DKADREEGKE (77 aa). Repeat copies occupy residues 104–110, 111–117, 118–124, 125–131, 132–138, 139–140, 141–142, 143–144, 150–151, 152–153, 154–155, 156–157, 158–159, 160–161, and 162–163. The 5 X 7 AA approximate tandem repeats of D-R-[SG]-H-D-K-S stretch occupies residues 104–138; the sequence is DRSHDKSDRGHDKSDRSHEKPDRGHDKSDRGHDKS. Positions 139–144 are 3 X 2 AA tandem repeats of [DE]-R; sequence DRDRER. A 7 X 2 AA tandem repeats of [DE]-R region spans residues 150-163; the sequence is DRERERDRERDRDR. The tract at residues 245–255 is important for interaction with TXNL4A; the sequence is YPSPGAVLRAN. Serine 247 is subject to Phosphoserine.

As to quaternary structure, interacts with POU3F2/Brn-2, ATXN1, TXNL4A, HTT and AR. Interaction with ATXN1 correlates positively with the length of the polyglutamine tract. Interacts with RNA polymerase II large subunit in a phosphorylation-dependent manner. Forms a ternary complex with ATXN1 mutant and phosphorylated RNA polymerase II. Interacts (via C-terminus) with TXNL4A and CD2BP2. Interacts (via WW domain) with ATN1 and SF3B1, and may interact with additional splice factors. Interacts (via WW domain) with WBP11; Leading to reduce interaction between PQBP1 and TXNL4A. Interacts with CAPRIN1. Interacts with DDX1. Interacts with SFPQ. Interacts with KHSRP.

The protein resides in the nucleus. It localises to the nucleus speckle. Its subcellular location is the cytoplasmic granule. Functionally, intrinsically disordered protein that acts as a scaffold, and which is involved in different processes, such as pre-mRNA splicing, transcription regulation, innate immunity and neuron development. Interacts with splicing-related factors via the intrinsically disordered region and regulates alternative splicing of target pre-mRNA species. May suppress the ability of POU3F2 to transactivate the DRD1 gene in a POU3F2 dependent manner. Can activate transcription directly or via association with the transcription machinery. May be involved in ATXN1 mutant-induced cell death. The interaction with ATXN1 mutant reduces levels of phosphorylated RNA polymerase II large subunit. Involved in the assembly of cytoplasmic stress granule, possibly by participating in the transport of neuronal RNA granules. Also acts as an innate immune sensor of infection by retroviruses, by detecting the presence of reverse-transcribed DNA in the cytosol. Directly binds retroviral reverse-transcribed DNA in the cytosol and interacts with CGAS, leading to activate the cGAS-STING signaling pathway, triggering type-I interferon production. This Pongo pygmaeus (Bornean orangutan) protein is Polyglutamine-binding protein 1 (PQBP1).